The primary structure comprises 537 residues: Sodium/hydrogen exchanger 9B2 (537 aa).

The segment covering 1–10 (MGDEDKRITY) has biased composition (basic and acidic residues). Residues 1 to 33 (MGDEDKRITYEDSEPSTGMNYTPSMHQETQEET) are disordered. At 1–86 (MGDEDKRITY…ACPPHGLLDR (86 aa)) the chain is on the cytoplasmic side. The span at 15-27 (PSTGMNYTPSMHQ) shows a compositional bias: polar residues. Position 49 is a phosphoserine (Ser-49). Residues 87–104 (VVTNVTIIVLLWAVIWSI) form a helical membrane-spanning segment. Over 105 to 113 (TGSECLPGG) the chain is Extracellular. A helical membrane pass occupies residues 114-133 (NLFGIIILFYCAIIGGKLLG). At 134 to 144 (LIKLPTLPPLP) the chain is on the cytoplasmic side. A helical membrane pass occupies residues 145–161 (SLLGMLLAGFLIRNIPV). Topologically, residues 162–171 (INDNVQIKHK) are extracellular. The helical transmembrane segment at 172–189 (WSSSLRSIALSIILVRAG) threads the bilayer. The Cytoplasmic segment spans residues 190 to 200 (LGLDSKALKKL). Residues 201–227 (KGVCVRLSMGPCIVEACTSALLAHYLL) form a helical membrane-spanning segment. Topologically, residues 228–233 (GLPWQW) are extracellular. A helical transmembrane segment spans residues 234–242 (GFILGFVLG). Topologically, residues 243–270 (AVSPAVVVPSMLLLQGGGYGVEKGVPTL) are cytoplasmic. Na(+)-binding residues include Val-244, Gly-275, Asp-278, and Asp-279. Residues 271–290 (LMAAGSFDDILAITGFNTCL) traverse the membrane as a helical segment. Residues 291-300 (GIAFSTGSTV) are Extracellular-facing. Residues 301 to 324 (FNVLRGVLEVVIGVATGSVLGFFI) traverse the membrane as a helical segment. Topologically, residues 325-339 (QYFPSCDQDKLVCKR) are cytoplasmic. A helical transmembrane segment spans residues 340 to 357 (TFLVLGLSVLAVFSSVHF). Residues 358–361 (GFPG) are Extracellular-facing. The helical transmembrane segment at 362–373 (SGGLCTLVMAFL) threads the bilayer. Residues 374-390 (AGMGWTSEKAEVEKIIA) lie on the Cytoplasmic side of the membrane. Residues 391 to 411 (VAWDIFQPLLFGLIGAEVSIA) traverse the membrane as a helical segment. Residues 412–417 (SLRPET) lie on the Extracellular side of the membrane. A helical transmembrane segment spans residues 418–440 (VGLCVATVGIAVLIRILTTFLMV). The Cytoplasmic portion of the chain corresponds to 441 to 461 (CFAGFNLKEKIFISFAWLPKA). The helical transmembrane segment at 462–473 (TVQAAIGSVALD) threads the bilayer. Residues 474-486 (TARSHGEKQLEDY) are Extracellular-facing. Residues 487–509 (GMDVLTVAFLSILITAPIGSLLI) form a helical membrane-spanning segment. Residues 510–537 (GLLGPRLLQKVEHQNKDEEVQGETSVQV) lie on the Cytoplasmic side of the membrane.

It belongs to the monovalent cation:proton antiporter 1 (CPA1) transporter (TC 2.A.36) family. As to quaternary structure, homodimer; dimerization is essential for SLC9B2 activity. Lipids seem to play a role in the stabilization of the dimerization subdomain.

It localises to the cell membrane. The protein localises to the mitochondrion membrane. It is found in the endosome membrane. The protein resides in the recycling endosome membrane. Its subcellular location is the cytoplasmic vesicle. It localises to the secretory vesicle. The protein localises to the synaptic vesicle membrane. It is found in the basolateral cell membrane. The protein resides in the apical cell membrane. It carries out the reaction Li(+)(out) + H(+)(in) = Li(+)(in) + H(+)(out). The enzyme catalyses Li(+)(in) + Na(+)(out) = Li(+)(out) + Na(+)(in). It catalyses the reaction Na(+)(in) + H(+)(out) = Na(+)(out) + H(+)(in). Its activity is regulated as follows. Allosterically inhibited by the N-terminal domain. Inhibited by phloretin. Functionally, electroneutral Na(+) Li(+)/H(+) antiporter that extrudes Na(+) or Li(+) in exchange for external protons across the membrane. Uses the proton gradient/membrane potential to extrude sodium. Contributes to the regulation of intracellular pH and sodium homeostasis. Also able to mediate Na(+)/Li(+) antiporter activity in kidney. May play a physiological role in renal tubular function and blood pressure homeostasis. Plays an important role for insulin secretion and clathrin-mediated endocytosis in beta-cells. Involved in sperm motility and fertility. It is controversial whether SLC9B2 plays a role in osteoclast differentiation or not. This is Sodium/hydrogen exchanger 9B2 (SLC9B2) from Pongo abelii (Sumatran orangutan).